Consider the following 65-residue polypeptide: Large ribosomal subunit protein uL30 (65 aa).

This sequence belongs to the universal ribosomal protein uL30 family. As to quaternary structure, part of the 50S ribosomal subunit.

This is Large ribosomal subunit protein uL30 from Onion yellows phytoplasma (strain OY-M).